The primary structure comprises 594 residues: MASSIKTVILFLLPLLLAYSVLAAPDITDGGDKPGPEIDDGGGDKPVPGNNDGASDYAKPAFEPEFMGAWVIDNPNAGVAAMQLQLMPNDQIVWFDTTSLGASGYKLPEGTPCPINPDANNQPDCYAHGIAYDWKTSKYRPLTLQGDAWCSSGNLWPNGNLMATGGTFSGDKAIRVIANDDPKGDFTTKIGALADTRWYSSNQVLPDGSSVVLGGRDSYSYEIVPPQMEFKPKRFDLPFMQQTTEPPLGPGRPVENNLYPFLFLLPDGNIFLFANNRAITFEPATGKTVKEFPVLPGGSRNYPPSGSAALFPLKLTADNAPVIPEIVICGGNQPNAYELVDARHVTEKQFLPALQDCNRIQPMAADAAWIPEQNMPSPRTMGDLIHLANGDMLMLNGAKKGTSGWEDATEANLTPVLYTPYKPMGQRFKELTPTTIARMYHSCSALLPDTRVLVAGSNMHQFYTFDTEFPTELRVEKFSPPYLDPALETERTQIDPANTDAVLKYGKPFKITAALMEKQPLVLGEVKVTLLYPPFTTHGFSQNQRMIVPAITSVQNGVITAVAPPSGQIAPPGYYIMFVSHLGIPGAGIWVHID.

An N-terminal signal peptide occupies residues 1 to 23 (MASSIKTVILFLLPLLLAYSVLA). The tract at residues 28–56 (TDGGDKPGPEIDDGGGDKPVPGNNDGASD) is disordered.

The N-terminus is blocked. Post-translationally, glycosylated. As to expression, expressed in pollen (at protein level).

The protein localises to the cytoplasm. It catalyses the reaction an aldehyde + O2 + H2O = a carboxylate + H2O2 + H(+). Functionally, catalyzes the oxidation of aldehydes to the corresponding carboxylate by coupling the reaction to the reduction of dioxygen to hydrogen peroxide. Substrates include glyoxal and other aldehydes. Does not have enzymatic activity on D-galactose. In Artemisia annua (Sweet wormwood), this protein is Putative aldehyde oxidase Art an 7.